Consider the following 459-residue polypeptide: MRAHLITYGCQMNEYDTHLVESQLVSFGADIVSSVDEADFVLINTCAVRGKPVDKVRSLLGDLRKQKAQRPLVVGMMGCLAQLEEGQQIARKFEVDVLLGPGSLLDIGKALETNERFWGLQFKDELHGHIPPPPQGKLQAHLTIMRGCDHHCTYCIVPTTRGPQVSRHPDDILRELDLLLAAGVQEVTLLGQNVNAYGVDQGARLAGYPSFANLLRLVGRSGIRRVKFTTSHPMNFTEDVAAAMAETPAVCEYVHLPVQSGSNRVLRRMAREYTREKYLSHIAEIRRHLPDVVLATDIIVGFPGETEEDFQETLSLYDEVGYDAAYMFIYSARPGTPSYKHFADLPREVKTERLQRLIAKQKEWSARKNAAKVGTIQEVLLRGDAHDAHFLEGHTRGNHPTVVPKAAGASGPGIYRARIEHATPHMLYGRLIGEDGQDLPELPRFNPEAAGLSHPLQMV.

One can recognise an MTTase N-terminal domain in the interval 1–116; sequence MRAHLITYGC…IGKALETNER (116 aa). [4Fe-4S] cluster is bound by residues C10, C46, C79, C148, C152, and C155. The 234-residue stretch at 134-367 folds into the Radical SAM core domain; it reads PQGKLQAHLT…IAKQKEWSAR (234 aa). The TRAM domain maps to 370 to 433; the sequence is AAKVGTIQEV…PHMLYGRLIG (64 aa).

Belongs to the methylthiotransferase family. MiaB subfamily. As to quaternary structure, monomer. It depends on [4Fe-4S] cluster as a cofactor.

The protein resides in the cytoplasm. The catalysed reaction is N(6)-dimethylallyladenosine(37) in tRNA + (sulfur carrier)-SH + AH2 + 2 S-adenosyl-L-methionine = 2-methylsulfanyl-N(6)-dimethylallyladenosine(37) in tRNA + (sulfur carrier)-H + 5'-deoxyadenosine + L-methionine + A + S-adenosyl-L-homocysteine + 2 H(+). Its function is as follows. Catalyzes the methylthiolation of N6-(dimethylallyl)adenosine (i(6)A), leading to the formation of 2-methylthio-N6-(dimethylallyl)adenosine (ms(2)i(6)A) at position 37 in tRNAs that read codons beginning with uridine. The chain is tRNA-2-methylthio-N(6)-dimethylallyladenosine synthase from Deinococcus geothermalis (strain DSM 11300 / CIP 105573 / AG-3a).